The sequence spans 147 residues: Protein PBDC1 homolog (147 aa).

It belongs to the PBDC1 family.

It localises to the cytoplasm. The protein resides in the nucleus. This is Protein PBDC1 homolog from Schizosaccharomyces pombe (strain 972 / ATCC 24843) (Fission yeast).